The chain runs to 213 residues: MNFTRIDLNTWNRREHFALYRQQIKCGFSLTTKLDITALRTALAETGYKFYPLMIYLISRAVNQFPEFRMALKDNELIYWDQSDPVFTVFHKETETFSALSCRYFPDLSEFMAGYNAVTAEYQHDTRLFPQGNLPENHLNISSLPWVSFDGFNLNITGNDDYFAPVFTMAKFQQEGDRVLLPVSVQVHHAVCDGFHAARFINTLQLMCDNILK.

His189 functions as the Proton acceptor in the catalytic mechanism.

Belongs to the chloramphenicol acetyltransferase family. Homotrimer.

It catalyses the reaction chloramphenicol + acetyl-CoA = chloramphenicol 3-acetate + CoA. This enzyme is an effector of chloramphenicol resistance in bacteria. This Escherichia coli protein is Chloramphenicol acetyltransferase 2 (cmlA).